A 156-amino-acid polypeptide reads, in one-letter code: 6,7-dimethyl-8-ribityllumazine synthase (156 aa).

5-amino-6-(D-ribitylamino)uracil is bound by residues Phe-22, Ala-57 to Glu-59, and Thr-81 to Ile-83. Residue Gly-86 to Thr-87 coordinates (2S)-2-hydroxy-3-oxobutyl phosphate. The Proton donor role is filled by His-89. A 5-amino-6-(D-ribitylamino)uracil-binding site is contributed by Phe-114. Residue Arg-128 coordinates (2S)-2-hydroxy-3-oxobutyl phosphate.

Belongs to the DMRL synthase family. As to quaternary structure, forms an icosahedral capsid composed of 60 subunits, arranged as a dodecamer of pentamers.

The enzyme catalyses (2S)-2-hydroxy-3-oxobutyl phosphate + 5-amino-6-(D-ribitylamino)uracil = 6,7-dimethyl-8-(1-D-ribityl)lumazine + phosphate + 2 H2O + H(+). The protein operates within cofactor biosynthesis; riboflavin biosynthesis; riboflavin from 2-hydroxy-3-oxobutyl phosphate and 5-amino-6-(D-ribitylamino)uracil: step 1/2. Its function is as follows. Catalyzes the formation of 6,7-dimethyl-8-ribityllumazine by condensation of 5-amino-6-(D-ribitylamino)uracil with 3,4-dihydroxy-2-butanone 4-phosphate. This is the penultimate step in the biosynthesis of riboflavin. This chain is 6,7-dimethyl-8-ribityllumazine synthase, found in Cronobacter sakazakii (strain ATCC BAA-894) (Enterobacter sakazakii).